The sequence spans 215 residues: Phosphatidylserine decarboxylase proenzyme (215 aa).

Residue Ser-181 is the Schiff-base intermediate with substrate; via pyruvic acid of the active site. Position 181 is a pyruvic acid (Ser); by autocatalysis (Ser-181).

Belongs to the phosphatidylserine decarboxylase family. PSD-A subfamily. Heterodimer of a large membrane-associated beta subunit and a small pyruvoyl-containing alpha subunit. Pyruvate serves as cofactor. Is synthesized initially as an inactive proenzyme. Formation of the active enzyme involves a self-maturation process in which the active site pyruvoyl group is generated from an internal serine residue via an autocatalytic post-translational modification. Two non-identical subunits are generated from the proenzyme in this reaction, and the pyruvate is formed at the N-terminus of the alpha chain, which is derived from the carboxyl end of the proenzyme. The post-translation cleavage follows an unusual pathway, termed non-hydrolytic serinolysis, in which the side chain hydroxyl group of the serine supplies its oxygen atom to form the C-terminus of the beta chain, while the remainder of the serine residue undergoes an oxidative deamination to produce ammonia and the pyruvoyl prosthetic group on the alpha chain.

Its subcellular location is the cell membrane. It carries out the reaction a 1,2-diacyl-sn-glycero-3-phospho-L-serine + H(+) = a 1,2-diacyl-sn-glycero-3-phosphoethanolamine + CO2. It functions in the pathway phospholipid metabolism; phosphatidylethanolamine biosynthesis; phosphatidylethanolamine from CDP-diacylglycerol: step 2/2. In terms of biological role, catalyzes the formation of phosphatidylethanolamine (PtdEtn) from phosphatidylserine (PtdSer). The protein is Phosphatidylserine decarboxylase proenzyme of Polynucleobacter asymbioticus (strain DSM 18221 / CIP 109841 / QLW-P1DMWA-1) (Polynucleobacter necessarius subsp. asymbioticus).